Here is a 418-residue protein sequence, read N- to C-terminus: AP-3 complex subunit mu-2 (418 aa).

An MHD domain is found at 176 to 417; the sequence is NNEAYFDVVE…MTKAGKFQVR (242 aa).

It belongs to the adaptor complexes medium subunit family. As to quaternary structure, adaptor protein complex 3 (AP-3) is a heterotetramer composed of two large adaptins (delta-type subunit AP3D1 and beta-type subunit AP3B1 or AP3B2), a medium adaptin (mu-type subunit AP3M1 or AP3M2) and a small adaptin (sigma-type subunit APS1 or AP3S2). AP-3 associates with the BLOC-1 complex.

The protein localises to the golgi apparatus. The protein resides in the cytoplasmic vesicle membrane. Component of the adaptor complexes which link clathrin to receptors in coated vesicles. Clathrin-associated protein complexes are believed to interact with the cytoplasmic tails of membrane proteins, leading to their selection and concentration. Ap47 is a subunit of the plasma membrane adaptor. In concert with the BLOC-1 complex, AP-3 is required to target cargos into vesicles assembled at cell bodies for delivery into neurites and nerve terminals. This is AP-3 complex subunit mu-2 (Ap3m2) from Mus musculus (Mouse).